Here is a 519-residue protein sequence, read N- to C-terminus: Bifunctional purine biosynthesis protein PurH (519 aa).

One can recognise an MGS-like domain in the interval 1–147 (MAKITRALIS…KNNHDVTVLV (147 aa)).

The protein belongs to the PurH family.

It carries out the reaction (6R)-10-formyltetrahydrofolate + 5-amino-1-(5-phospho-beta-D-ribosyl)imidazole-4-carboxamide = 5-formamido-1-(5-phospho-D-ribosyl)imidazole-4-carboxamide + (6S)-5,6,7,8-tetrahydrofolate. The enzyme catalyses IMP + H2O = 5-formamido-1-(5-phospho-D-ribosyl)imidazole-4-carboxamide. Its pathway is purine metabolism; IMP biosynthesis via de novo pathway; 5-formamido-1-(5-phospho-D-ribosyl)imidazole-4-carboxamide from 5-amino-1-(5-phospho-D-ribosyl)imidazole-4-carboxamide (10-formyl THF route): step 1/1. The protein operates within purine metabolism; IMP biosynthesis via de novo pathway; IMP from 5-formamido-1-(5-phospho-D-ribosyl)imidazole-4-carboxamide: step 1/1. The sequence is that of Bifunctional purine biosynthesis protein PurH from Trichlorobacter lovleyi (strain ATCC BAA-1151 / DSM 17278 / SZ) (Geobacter lovleyi).